We begin with the raw amino-acid sequence, 235 residues long: Ribitol-5-phosphate cytidylyltransferase (235 aa).

CTP-binding positions include 7-10 (LAGG), 82-88 (GADRNTS), and Ser113.

The protein belongs to the IspD/TarI cytidylyltransferase family. TarI subfamily.

It carries out the reaction D-ribitol 5-phosphate + CTP + H(+) = CDP-L-ribitol + diphosphate. It participates in cell wall biogenesis; poly(ribitol phosphate) teichoic acid biosynthesis. Catalyzes the transfer of the cytidylyl group of CTP to D-ribitol 5-phosphate. In Streptococcus pneumoniae (strain CGSP14), this protein is Ribitol-5-phosphate cytidylyltransferase.